Here is a 557-residue protein sequence, read N- to C-terminus: Laccase-11 (557 aa).

Positions 1–23 (MKMGFLFLFCYLLAFLGYSPVDA) are cleaved as a signal peptide. Plastocyanin-like domains are found at residues 31–147 (DVQV…PAPG) and 158–308 (ESNI…YKGV). 3 N-linked (GlcNAc...) asparagine glycosylation sites follow: N36, N69, and N77. Cu cation-binding residues include H81 and H83. N-linked (GlcNAc...) asparagine glycosylation occurs at N115. Cu cation-binding residues include H126 and H128. N240, N296, N323, N371, N381, N398, N416, and N440 each carry an N-linked (GlcNAc...) asparagine glycan. Positions 406–541 (DFPDRPPKAF…KMAFVVENGE (136 aa)) constitute a Plastocyanin-like 3 domain. Positions 458, 461, 463, 520, 521, 522, and 526 each coordinate Cu cation.

Belongs to the multicopper oxidase family. Cu cation is required as a cofactor. As to expression, ubiquitous and constitutive.

The protein resides in the secreted. Its subcellular location is the extracellular space. It localises to the apoplast. The catalysed reaction is 4 hydroquinone + O2 = 4 benzosemiquinone + 2 H2O. Its function is as follows. Lignin degradation and detoxification of lignin-derived products. The protein is Laccase-11 (LAC11) of Arabidopsis thaliana (Mouse-ear cress).